The following is a 409-amino-acid chain: uncharacterized protein (409 aa).

3 disordered regions span residues 12–32 (ENTE…LHCP), 133–160 (EVST…SREQ), and 194–213 (TVSS…GLST). Residues 134–160 (VSTQKSWSSEKNWSGLSQGPGTASREQ) are compositionally biased toward polar residues.

This is an uncharacterized protein from Mus musculus (Mouse).